A 332-amino-acid chain; its full sequence is Anthranilate phosphoribosyltransferase (332 aa).

Residues G79, 82–83, T87, 89–92, 107–115, and S119 each bind 5-phospho-alpha-D-ribose 1-diphosphate; these read GD, NIST, and KHGNRSVSS. G79 serves as a coordination point for anthranilate. Residue S91 coordinates Mg(2+). N110 is an anthranilate binding site. R165 provides a ligand contact to anthranilate. Mg(2+)-binding residues include D223 and E224.

This sequence belongs to the anthranilate phosphoribosyltransferase family. Homodimer. Mg(2+) is required as a cofactor.

The enzyme catalyses N-(5-phospho-beta-D-ribosyl)anthranilate + diphosphate = 5-phospho-alpha-D-ribose 1-diphosphate + anthranilate. The protein operates within amino-acid biosynthesis; L-tryptophan biosynthesis; L-tryptophan from chorismate: step 2/5. Functionally, catalyzes the transfer of the phosphoribosyl group of 5-phosphorylribose-1-pyrophosphate (PRPP) to anthranilate to yield N-(5'-phosphoribosyl)-anthranilate (PRA). This Vibrio vulnificus (strain YJ016) protein is Anthranilate phosphoribosyltransferase.